A 370-amino-acid chain; its full sequence is WAT1-related protein At1g44800 (370 aa).

The next 10 helical transmembrane spans lie at 11-31, 41-61, 67-87, 102-122, 142-162, 182-202, 216-236, 252-272, 278-298, and 303-323; these read PILA…ITMV, VLAT…ALMF, PKMT…EPLM, SYTS…ALIF, VITV…IEIV, WVLG…FFIL, LVTL…LIMV, AAVY…SIVI, VFTT…GALV, and IHLG…SVVW. EamA domains lie at 23–143 and 195–322; these read AGMY…GTVI and TWAA…YSVV.

Belongs to the drug/metabolite transporter (DMT) superfamily. Plant drug/metabolite exporter (P-DME) (TC 2.A.7.4) family.

The protein localises to the membrane. The sequence is that of WAT1-related protein At1g44800 from Arabidopsis thaliana (Mouse-ear cress).